Reading from the N-terminus, the 452-residue chain is Bifunctional protein GlmU (452 aa).

The interval 1 to 226 (MNFSAVILAA…PIEVEGVNDR (226 aa)) is pyrophosphorylase. UDP-N-acetyl-alpha-D-glucosamine-binding positions include 8–11 (LAAG), Lys-22, Gln-73, 78–79 (GT), 100–102 (YGD), Gly-137, Glu-151, Asn-166, and Asn-224. A Mg(2+)-binding site is contributed by Asp-102. Mg(2+) is bound at residue Asn-224. The linker stretch occupies residues 227 to 247 (AQLARLERAYQAAQAQKLLEQ). Residues 248–452 (GVMLRDPSRF…IANWQRPTKK (205 aa)) are N-acetyltransferase. UDP-N-acetyl-alpha-D-glucosamine contacts are provided by Arg-330 and Lys-348. The active-site Proton acceptor is His-360. UDP-N-acetyl-alpha-D-glucosamine contacts are provided by Tyr-363 and Asn-374. Acetyl-CoA-binding positions include Ala-377, 383-384 (NY), Ser-402, Ala-420, and Arg-437.

This sequence in the N-terminal section; belongs to the N-acetylglucosamine-1-phosphate uridyltransferase family. It in the C-terminal section; belongs to the transferase hexapeptide repeat family. In terms of assembly, homotrimer. Mg(2+) is required as a cofactor.

The protein localises to the cytoplasm. It catalyses the reaction alpha-D-glucosamine 1-phosphate + acetyl-CoA = N-acetyl-alpha-D-glucosamine 1-phosphate + CoA + H(+). The catalysed reaction is N-acetyl-alpha-D-glucosamine 1-phosphate + UTP + H(+) = UDP-N-acetyl-alpha-D-glucosamine + diphosphate. The protein operates within nucleotide-sugar biosynthesis; UDP-N-acetyl-alpha-D-glucosamine biosynthesis; N-acetyl-alpha-D-glucosamine 1-phosphate from alpha-D-glucosamine 6-phosphate (route II): step 2/2. Its pathway is nucleotide-sugar biosynthesis; UDP-N-acetyl-alpha-D-glucosamine biosynthesis; UDP-N-acetyl-alpha-D-glucosamine from N-acetyl-alpha-D-glucosamine 1-phosphate: step 1/1. It functions in the pathway bacterial outer membrane biogenesis; LPS lipid A biosynthesis. In terms of biological role, catalyzes the last two sequential reactions in the de novo biosynthetic pathway for UDP-N-acetylglucosamine (UDP-GlcNAc). The C-terminal domain catalyzes the transfer of acetyl group from acetyl coenzyme A to glucosamine-1-phosphate (GlcN-1-P) to produce N-acetylglucosamine-1-phosphate (GlcNAc-1-P), which is converted into UDP-GlcNAc by the transfer of uridine 5-monophosphate (from uridine 5-triphosphate), a reaction catalyzed by the N-terminal domain. This Aliivibrio fischeri (strain MJ11) (Vibrio fischeri) protein is Bifunctional protein GlmU.